The primary structure comprises 268 residues: GTP cyclohydrolase FolE2 (268 aa).

It belongs to the GTP cyclohydrolase IV family.

It catalyses the reaction GTP + H2O = 7,8-dihydroneopterin 3'-triphosphate + formate + H(+). It participates in cofactor biosynthesis; 7,8-dihydroneopterin triphosphate biosynthesis; 7,8-dihydroneopterin triphosphate from GTP: step 1/1. Converts GTP to 7,8-dihydroneopterin triphosphate. This chain is GTP cyclohydrolase FolE2, found in Paraburkholderia phymatum (strain DSM 17167 / CIP 108236 / LMG 21445 / STM815) (Burkholderia phymatum).